Reading from the N-terminus, the 429-residue chain is UDP-glucuronate 4-epimerase 1 (429 aa).

The next 2 helical transmembrane spans lie at 36–56 and 87–107; these read FLWA…QSFV and GISV…SLAL. NAD(+) is bound at residue 89–120; that stretch reads SVLVTGATGFVGSHVSLALRKRGDGVVGLDNF. Tyr-239 functions as the Proton acceptor in the catalytic mechanism.

This sequence belongs to the NAD(P)-dependent epimerase/dehydratase family. As to quaternary structure, homodimer. As to expression, in root stele, leaves, siliques, flowers, pollen and stems.

It localises to the golgi apparatus. The protein resides in the golgi stack membrane. The catalysed reaction is UDP-alpha-D-glucuronate = UDP-alpha-D-galacturonate. Inhibited by UDP-Xylose. UDP-D-glucuronate 4-epimerase involved in the synthesis of the negatively charged monosaccharide that forms the backbone of pectic cell wall components. The polypeptide is UDP-glucuronate 4-epimerase 1 (GAE1) (Arabidopsis thaliana (Mouse-ear cress)).